The chain runs to 358 residues: Electron transfer flavoprotein subunit alpha, mitochondrial (358 aa).

FAD is bound at residue 298 to 326; that stretch reads LYMAFGVSGAIQHLAGMRDSKVIVAVNKD.

It belongs to the ETF alpha-subunit/FixB family. Heterodimer of an alpha and a beta subunit. Requires FAD as cofactor.

It is found in the mitochondrion matrix. In terms of biological role, the electron transfer flavoprotein serves as a specific electron acceptor for several dehydrogenases, including five acyl-CoA dehydrogenases, glutaryl-CoA and sarcosine dehydrogenase. It transfers the electrons to the main mitochondrial respiratory chain via ETF-ubiquinone oxidoreductase (ETF dehydrogenase). This chain is Electron transfer flavoprotein subunit alpha, mitochondrial (ETFA), found in Oryza sativa subsp. indica (Rice).